The primary structure comprises 155 residues: Transcription antitermination protein NusB (155 aa).

The protein belongs to the NusB family.

Involved in transcription antitermination. Required for transcription of ribosomal RNA (rRNA) genes. Binds specifically to the boxA antiterminator sequence of the ribosomal RNA (rrn) operons. In Ralstonia pickettii (strain 12J), this protein is Transcription antitermination protein NusB.